A 195-amino-acid polypeptide reads, in one-letter code: Small ribosomal subunit protein uS4c (195 aa).

An S4 RNA-binding domain is found at 82-143 (MRLDNILFRL…KQRSKALIQN (62 aa)).

Belongs to the universal ribosomal protein uS4 family. In terms of assembly, part of the 30S ribosomal subunit. Contacts protein S5. The interaction surface between S4 and S5 is involved in control of translational fidelity.

The protein resides in the plastid. It is found in the chloroplast. Its function is as follows. One of the primary rRNA binding proteins, it binds directly to 16S rRNA where it nucleates assembly of the body of the 30S subunit. With S5 and S12 plays an important role in translational accuracy. This Pillansia templemannii protein is Small ribosomal subunit protein uS4c (rps4).